The sequence spans 535 residues: Bifunctional purine biosynthesis protein PurH (535 aa).

The region spanning 1-145 (MAQTALISVS…KNWKDVGVLT (145 aa)) is the MGS-like domain.

Belongs to the PurH family.

It catalyses the reaction (6R)-10-formyltetrahydrofolate + 5-amino-1-(5-phospho-beta-D-ribosyl)imidazole-4-carboxamide = 5-formamido-1-(5-phospho-D-ribosyl)imidazole-4-carboxamide + (6S)-5,6,7,8-tetrahydrofolate. It carries out the reaction IMP + H2O = 5-formamido-1-(5-phospho-D-ribosyl)imidazole-4-carboxamide. It functions in the pathway purine metabolism; IMP biosynthesis via de novo pathway; 5-formamido-1-(5-phospho-D-ribosyl)imidazole-4-carboxamide from 5-amino-1-(5-phospho-D-ribosyl)imidazole-4-carboxamide (10-formyl THF route): step 1/1. The protein operates within purine metabolism; IMP biosynthesis via de novo pathway; IMP from 5-formamido-1-(5-phospho-D-ribosyl)imidazole-4-carboxamide: step 1/1. The chain is Bifunctional purine biosynthesis protein PurH from Variovorax paradoxus (strain S110).